Here is a 383-residue protein sequence, read N- to C-terminus: Homoserine O-succinyltransferase (383 aa).

An AB hydrolase-1 domain is found at 51–360 (NAILLCHALS…EAEHGHDSFL (310 aa)). The active-site Nucleophile is Ser157. Arg227 contributes to the substrate binding site. Active-site residues include Asp323 and His356. Position 357 (Asp357) interacts with substrate.

The protein belongs to the AB hydrolase superfamily. MetX family. Homodimer.

The protein localises to the cytoplasm. The catalysed reaction is L-homoserine + succinyl-CoA = O-succinyl-L-homoserine + CoA. Its pathway is amino-acid biosynthesis; L-methionine biosynthesis via de novo pathway; O-succinyl-L-homoserine from L-homoserine: step 1/1. Its function is as follows. Transfers a succinyl group from succinyl-CoA to L-homoserine, forming succinyl-L-homoserine. This Acidithiobacillus ferrooxidans (strain ATCC 23270 / DSM 14882 / CIP 104768 / NCIMB 8455) (Ferrobacillus ferrooxidans (strain ATCC 23270)) protein is Homoserine O-succinyltransferase.